The primary structure comprises 395 residues: Non-homologous end joining protein Ku (395 aa).

Residues 9-181 (ISFGLVSIPI…PPEDAAPDGD (173 aa)) form the Ku domain. The tract at residues 252–395 (RAARTSRDDE…SASSRKRTSA (144 aa)) is disordered. Composition is skewed to polar residues over residues 283–292 (SSKTSGQSSG) and 311–320 (GKTVTRSGDS). Basic residues predominate over residues 351-361 (TARKTTAKKTT). Over residues 362-371 (AKGTTGTTAA) the composition is skewed to low complexity.

The protein belongs to the prokaryotic Ku family. Homodimer. Interacts with LigD.

Functionally, with LigD forms a non-homologous end joining (NHEJ) DNA repair enzyme, which repairs dsDNA breaks with reduced fidelity. Binds linear dsDNA with 5'- and 3'- overhangs but not closed circular dsDNA nor ssDNA. Recruits and stimulates the ligase activity of LigD. This is Non-homologous end joining protein Ku from Streptomyces griseus subsp. griseus (strain JCM 4626 / CBS 651.72 / NBRC 13350 / KCC S-0626 / ISP 5235).